The chain runs to 286 residues: Bifunctional protein FolD (286 aa).

NADP(+) contacts are provided by residues 164–166 and Ile230; that span reads GTS.

Belongs to the tetrahydrofolate dehydrogenase/cyclohydrolase family. In terms of assembly, homodimer.

It catalyses the reaction (6R)-5,10-methylene-5,6,7,8-tetrahydrofolate + NADP(+) = (6R)-5,10-methenyltetrahydrofolate + NADPH. The catalysed reaction is (6R)-5,10-methenyltetrahydrofolate + H2O = (6R)-10-formyltetrahydrofolate + H(+). Its pathway is one-carbon metabolism; tetrahydrofolate interconversion. Its function is as follows. Catalyzes the oxidation of 5,10-methylenetetrahydrofolate to 5,10-methenyltetrahydrofolate and then the hydrolysis of 5,10-methenyltetrahydrofolate to 10-formyltetrahydrofolate. The polypeptide is Bifunctional protein FolD (Mesoplasma florum (strain ATCC 33453 / NBRC 100688 / NCTC 11704 / L1) (Acholeplasma florum)).